We begin with the raw amino-acid sequence, 71 residues long: Large ribosomal subunit protein uL29 (71 aa).

This sequence belongs to the universal ribosomal protein uL29 family.

This chain is Large ribosomal subunit protein uL29 (rpl29), found in Aeropyrum pernix (strain ATCC 700893 / DSM 11879 / JCM 9820 / NBRC 100138 / K1).